We begin with the raw amino-acid sequence, 29 residues long: Cytochrome b6-f complex subunit 8 (29 aa).

A helical membrane pass occupies residues Met3–Val23.

The protein belongs to the PetN family. In terms of assembly, the 4 large subunits of the cytochrome b6-f complex are cytochrome b6, subunit IV (17 kDa polypeptide, PetD), cytochrome f and the Rieske protein, while the 4 small subunits are PetG, PetL, PetM and PetN. The complex functions as a dimer.

The protein localises to the plastid. Its subcellular location is the chloroplast thylakoid membrane. In terms of biological role, component of the cytochrome b6-f complex, which mediates electron transfer between photosystem II (PSII) and photosystem I (PSI), cyclic electron flow around PSI, and state transitions. This Cucumis sativus (Cucumber) protein is Cytochrome b6-f complex subunit 8.